A 345-amino-acid chain; its full sequence is Putative mediator of RNA polymerase II transcription subunit 7 (345 aa).

Low complexity-rich tracts occupy residues 1 to 27 and 88 to 126; these read MNTS…TPQQ and NNNN…NNNN. 2 disordered regions span residues 1 to 130 and 292 to 315; these read MNTS…KATT and TPLP…NNSQ.

It belongs to the Mediator complex subunit 7 family. Component of the Mediator complex.

The protein resides in the nucleus. In terms of biological role, component of the Mediator complex, a coactivator involved in the regulated transcription of nearly all RNA polymerase II-dependent genes. Mediator functions as a bridge to convey information from gene-specific regulatory proteins to the basal RNA polymerase II transcription machinery. Mediator is recruited to promoters by direct interactions with regulatory proteins and serves as a scaffold for the assembly of a functional preinitiation complex with RNA polymerase II and the general transcription factors. The polypeptide is Putative mediator of RNA polymerase II transcription subunit 7 (med7) (Dictyostelium discoideum (Social amoeba)).